Here is a 154-residue protein sequence, read N- to C-terminus: MATFSQKPTEVVKKWVIIDAENLVLGRLAAFVANRLRGKHKATFTPHVDDGDNVIVINADKIVLTGKKYTDKKYYWHTGYIGGIKERTARQILEGRFPERVVEKAVERMIPRGPLGRRQLRNLHVYAGSQNPHAAQQPEALDVGALNRKNKRIA.

Belongs to the universal ribosomal protein uL13 family. In terms of assembly, part of the 50S ribosomal subunit.

Its function is as follows. This protein is one of the early assembly proteins of the 50S ribosomal subunit, although it is not seen to bind rRNA by itself. It is important during the early stages of 50S assembly. The polypeptide is Large ribosomal subunit protein uL13 (Bartonella quintana (strain Toulouse) (Rochalimaea quintana)).